Consider the following 767-residue polypeptide: Ribonucleoside-diphosphate reductase subunit alpha (767 aa).

Positions 1-30 are disordered; the sequence is MHPTLISAPISSSANDAHAGTSQGSHQGHR. The segment covering 9–26 has biased composition (polar residues); that stretch reads PISSSANDAHAGTSQGSH. Residues 31–120 form the ATP-cone domain; the sequence is IQVIRRDGSS…VWSLWKDTLV (90 aa). Substrate is bound by residues Thr-228, 243 to 244, Gly-272, 460 to 464, and 631 to 635; these read SC, NLCCE, and PNTSS. An intrachain disulfide couples Cys-244 to Cys-478. Asn-460 (proton acceptor) is an active-site residue. Cys-462 (cysteine radical intermediate) is an active-site residue. Glu-464 functions as the Proton acceptor in the catalytic mechanism.

Belongs to the ribonucleoside diphosphate reductase large chain family. Tetramer of two alpha and two beta subunits.

The enzyme catalyses a 2'-deoxyribonucleoside 5'-diphosphate + [thioredoxin]-disulfide + H2O = a ribonucleoside 5'-diphosphate + [thioredoxin]-dithiol. Under complex allosteric control mediated by deoxynucleoside triphosphates and ATP binding. The type of nucleotide bound at the specificity site determines substrate preference. It seems probable that ATP makes the enzyme reduce CDP and UDP, dGTP favors ADP reduction and dTTP favors GDP reduction. Provides the precursors necessary for DNA synthesis. Catalyzes the biosynthesis of deoxyribonucleotides from the corresponding ribonucleotides. The chain is Ribonucleoside-diphosphate reductase subunit alpha (nrdA) from Synechocystis sp. (strain ATCC 27184 / PCC 6803 / Kazusa).